Consider the following 300-residue polypeptide: Transcription factor E2F5 (300 aa).

A DNA-binding region spans residues 2–73 (GSSRHEKSLG…KNSIQWKGVG (72 aa)). The leucine-zipper stretch occupies residues 31-53 (LKAAADTLAVRQKRRIYDITNVL). The DEF box signature appears at 36 to 73 (DTLAVRQKRRIYDITNVLEGIDLIEKKSKNSIQWKGVG). The dimerization stretch occupies residues 74 to 170 (AGCNTKEVID…GQNGQKKYQI (97 aa)). Positions 191 to 250 (SKPVVFPVPPPDDLTQPSSQSSTSVTPPKSTMAAQNLPEQHVSERSQNFQQTPATEISSG) are disordered. The span at 203–221 (DLTQPSSQSSTSVTPPKST) shows a compositional bias: low complexity. Over residues 235-246 (RSQNFQQTPATE) the composition is skewed to polar residues. The transactivation stretch occupies residues 242-300 (TPATEISSGSISGDIIDELMSSDVFPLLRLSPTPADDYNFNLDDNEGVCDLFDVQILNY). The RBL2 association stretch occupies residues 277–294 (DDYNFNLDDNEGVCDLFD).

It belongs to the E2F/DP family. Component of the DRTF1/E2F transcription factor complex. Binds cooperatively with DP-1 to E2F sites. Interaction with retinoblastoma protein RB1 or proteins RBL1 and RBL2 inhibits the E2F transactivation domain. Component of the DREAM complex (also named LINC complex) at least composed of E2F4, E2F5, LIN9, LIN37, LIN52, LIN54, MYBL1, MYBL2, RBL1, RBL2, RBBP4, TFDP1 and TFDP2. The complex exists in quiescent cells where it represses cell cycle-dependent genes. It dissociates in S phase when LIN9, LIN37, LIN52 and LIN54 form a subcomplex that binds to MYBL2. Found in placenta followed by kidney, lung and brain.

It is found in the nucleus. In terms of biological role, transcriptional activator that binds to E2F sites, these sites are present in the promoter of many genes whose products are involved in cell proliferation. May mediate growth factor-initiated signal transduction. It is likely involved in the early responses of resting cells to growth factor stimulation. Specifically required for multiciliate cell differentiation: together with MCIDAS and E2F5, binds and activate genes required for centriole biogenesis. The chain is Transcription factor E2F5 (E2f5) from Rattus norvegicus (Rat).